Reading from the N-terminus, the 917-residue chain is Outer membrane protein SlpA (917 aa).

Positions 1-23 (MKKRLVTLLAGLLTVLSMGFGLA) are cleaved as a signal peptide. In terms of domain architecture, SLH spans 24–84 (QFSDVPAGHW…QQIEEELKTQ (61 aa)).

Homotrimer.

The protein resides in the cell outer membrane. Plays an important role in the structural organization and integrity of the cell envelope, bridging the outer membrane to the peptidoglyan layer. Appears to be a nonselective channel. The chain is Outer membrane protein SlpA (slpA) from Thermus thermophilus (strain ATCC 27634 / DSM 579 / HB8).